The chain runs to 93 residues: Small ribosomal subunit protein uS19 (93 aa).

Belongs to the universal ribosomal protein uS19 family.

Its function is as follows. Protein S19 forms a complex with S13 that binds strongly to the 16S ribosomal RNA. This Alkaliphilus metalliredigens (strain QYMF) protein is Small ribosomal subunit protein uS19.